The sequence spans 127 residues: Glycine cleavage system H protein (127 aa).

One can recognise a Lipoyl-binding domain in the interval 22-104 (KARIGITHFA…YEKAWMIVVE (83 aa)). K63 is modified (N6-lipoyllysine).

This sequence belongs to the GcvH family. The glycine cleavage system is composed of four proteins: P, T, L and H. (R)-lipoate serves as cofactor.

Its function is as follows. The glycine cleavage system catalyzes the degradation of glycine. The H protein shuttles the methylamine group of glycine from the P protein to the T protein. In terms of biological role, is also involved in protein lipoylation via its role as an octanoyl/lipoyl carrier protein intermediate. In Bacillus velezensis (strain DSM 23117 / BGSC 10A6 / LMG 26770 / FZB42) (Bacillus amyloliquefaciens subsp. plantarum), this protein is Glycine cleavage system H protein.